Here is a 176-residue protein sequence, read N- to C-terminus: Peptidyl-prolyl cis-trans isomerase CYP19-3 (176 aa).

A PPIase cyclophilin-type domain is found at 7-170 (FFDILIGKMK…ERVVIEDCGE (164 aa)).

Belongs to the cyclophilin-type PPIase family. In terms of tissue distribution, ubiquitous, with highest levels in flowers and lowest levels in roots.

It is found in the cytoplasm. The catalysed reaction is [protein]-peptidylproline (omega=180) = [protein]-peptidylproline (omega=0). Its activity is regulated as follows. Binds cyclosporin A (CsA). CsA mediates some of its effects via an inhibitory action on PPIase. PPIases accelerate the folding of proteins. It catalyzes the cis-trans isomerization of proline imidic peptide bonds in oligopeptides. This is Peptidyl-prolyl cis-trans isomerase CYP19-3 (CYP19-3) from Arabidopsis thaliana (Mouse-ear cress).